We begin with the raw amino-acid sequence, 301 residues long: D-alanine--D-alanine ligase (301 aa).

The ATP-grasp domain maps to 102–295 (KAVFAAAGLP…FPALCAWMVE (194 aa)). ATP is bound at residue 128–181 (PLPRPYVIKPVNEGSSVGVFILREGDNRRADIARAWRHGSVAMTEEYVPGRELT). Aspartate 248, glutamate 262, and asparagine 264 together coordinate Mg(2+).

It belongs to the D-alanine--D-alanine ligase family. Mg(2+) serves as cofactor. Mn(2+) is required as a cofactor.

Its subcellular location is the cytoplasm. The catalysed reaction is 2 D-alanine + ATP = D-alanyl-D-alanine + ADP + phosphate + H(+). It participates in cell wall biogenesis; peptidoglycan biosynthesis. Functionally, cell wall formation. This is D-alanine--D-alanine ligase from Acidiphilium cryptum (strain JF-5).